A 73-amino-acid chain; its full sequence is Acyl carrier protein homolog (73 aa).

In terms of domain architecture, Carrier spans 1 to 72; sequence MAIKEWIITQ…DIIVLIEQKS (72 aa). Serine 32 carries the O-(pantetheine 4'-phosphoryl)serine modification.

4'-phosphopantetheine is transferred from CoA to a specific serine of the apo-ACP-like protein.

The protein operates within lipid metabolism; fatty acid biosynthesis. In terms of biological role, carrier of the growing fatty acid chain in fatty acid biosynthesis. In Mycoplasmopsis pulmonis (strain UAB CTIP) (Mycoplasma pulmonis), this protein is Acyl carrier protein homolog.